We begin with the raw amino-acid sequence, 270 residues long: uncharacterized protein (270 aa).

This is an uncharacterized protein from Archaeoglobus fulgidus (strain ATCC 49558 / DSM 4304 / JCM 9628 / NBRC 100126 / VC-16).